A 446-amino-acid polypeptide reads, in one-letter code: Sorting nexin-30 (446 aa).

The segment covering 1–18 (MSGSSTPKSLPTSGQQSL) has biased composition (polar residues). Positions 1 to 84 (MSGSSTPKSL…SSPASSSSLL (84 aa)) are disordered. Residues 70 to 84 (TPADTSSPASSSSLL) show a composition bias toward low complexity. The region spanning 98–219 (RDLFVTVDDP…VFLTAKDLNS (122 aa)) is the PX domain. A 1,2-diacyl-sn-glycero-3-phospho-(1D-myo-inositol-3-phosphate)-binding residues include R141, Q143, K171, and R185. The BAR domain occupies 243-446 (KLRNRPVEFA…PLLQDKQEPK (204 aa)).

The protein belongs to the sorting nexin family.

It localises to the early endosome membrane. Its function is as follows. Involved in the regulation of endocytosis and in several stages of intracellular trafficking. Together with snx4, involved in autophagosome assembly. The polypeptide is Sorting nexin-30 (snx30) (Xenopus tropicalis (Western clawed frog)).